Here is a 376-residue protein sequence, read N- to C-terminus: Erythronate-4-phosphate dehydrogenase (376 aa).

Substrate contacts are provided by Ser-45 and Thr-67. Asp-147 provides a ligand contact to NAD(+). Residue Arg-209 is part of the active site. Asp-233 contributes to the NAD(+) binding site. Residue Glu-238 is part of the active site. His-255 functions as the Proton donor in the catalytic mechanism. Gly-258 lines the NAD(+) pocket. Tyr-259 provides a ligand contact to substrate.

The protein belongs to the D-isomer specific 2-hydroxyacid dehydrogenase family. PdxB subfamily. As to quaternary structure, homodimer.

The protein localises to the cytoplasm. The catalysed reaction is 4-phospho-D-erythronate + NAD(+) = (R)-3-hydroxy-2-oxo-4-phosphooxybutanoate + NADH + H(+). The protein operates within cofactor biosynthesis; pyridoxine 5'-phosphate biosynthesis; pyridoxine 5'-phosphate from D-erythrose 4-phosphate: step 2/5. Functionally, catalyzes the oxidation of erythronate-4-phosphate to 3-hydroxy-2-oxo-4-phosphonooxybutanoate. This chain is Erythronate-4-phosphate dehydrogenase, found in Shewanella baltica (strain OS155 / ATCC BAA-1091).